A 146-amino-acid chain; its full sequence is Transcriptional regulator MraZ (146 aa).

2 SpoVT-AbrB domains span residues threonine 9–valine 55 and alanine 81–arginine 124.

Belongs to the MraZ family. As to quaternary structure, forms oligomers.

The protein resides in the cytoplasm. It localises to the nucleoid. The chain is Transcriptional regulator MraZ from Leptothrix cholodnii (strain ATCC 51168 / LMG 8142 / SP-6) (Leptothrix discophora (strain SP-6)).